A 156-amino-acid chain; its full sequence is Small ribosomal subunit protein uS7c (156 aa).

Belongs to the universal ribosomal protein uS7 family. As to quaternary structure, part of the 30S ribosomal subunit.

It is found in the plastid. The protein resides in the chloroplast. One of the primary rRNA binding proteins, it binds directly to 16S rRNA where it nucleates assembly of the head domain of the 30S subunit. The sequence is that of Small ribosomal subunit protein uS7c (rps7) from Mesostigma viride (Green alga).